Here is a 475-residue protein sequence, read N- to C-terminus: Ammonium transporter Rh type C (475 aa).

Over 1-20 the chain is Cytoplasmic; the sequence is MGCVQSFRNFCDRPKNTNVR. Residues 21-41 form a helical membrane-spanning segment; the sequence is ISLPAVCFVWQIAMIILFGVF. At 42–73 the chain is on the extracellular side; the sequence is IRYNEEADTHWVEYRKKENISSDIENDFYFRY. The N-linked (GlcNAc...) asparagine glycan is linked to asparagine 60. Residues 74–94 form a helical membrane-spanning segment; it reads PSFQDVHVMIFVGFGFLMTFL. Residues 95–98 lie on the Cytoplasmic side of the membrane; that stretch reads KRYS. The helical transmembrane segment at 99 to 119 threads the bilayer; sequence FGAVGFNFLIAAFGLQWALLM. Residues 120–138 lie on the Extracellular side of the membrane; that stretch reads QGWFHSLDYTDGKIKIGIE. Residues 139–159 form a helical membrane-spanning segment; it reads NLINADFCVAGCLIAYGAVLG. Residues 160–167 lie on the Cytoplasmic side of the membrane; it reads KVSPVQLM. A helical transmembrane segment spans residues 168–188; that stretch reads VLTLFGITLFAVEEYIILNLI. At 189–193 the chain is on the extracellular side; it reads HARDA. A helical membrane pass occupies residues 194-214; it reads GGSMVIHTFGGYYGLSISWML. Residues 215–233 lie on the Cytoplasmic side of the membrane; that stretch reads YRPNLEQSSNLQGSVYQSD. A helical transmembrane segment spans residues 234–254; that stretch reads VFAMIGTLFLWMFWPSFNSAI. Residues 255–265 are Extracellular-facing; sequence TDHGDGQHRAA. A helical membrane pass occupies residues 266 to 286; that stretch reads INTYLALASTVLTTVAISSLF. Topologically, residues 287 to 299 are cytoplasmic; the sequence is QKHGKLDMVHIQN. The chain crosses the membrane as a helical span at residues 300–320; it reads STLAGGVAVGTAAEFMLMPYG. Residue serine 321 is a topological domain, extracellular. Residues 322-342 form a helical membrane-spanning segment; sequence LIVGFCCGIISTLGYIYLTPF. Residues 343 to 357 are Cytoplasmic-facing; the sequence is MEKYLKIQDTCGIHN. Residues 358-378 form a helical membrane-spanning segment; the sequence is LHAMPGLIGGIVGAITAAAAT. Residues 379 to 410 lie on the Extracellular side of the membrane; it reads ESVYGKEGLVNTFDFVGPFKNMVPTTQGGHQA. Residues 411 to 431 form a helical membrane-spanning segment; that stretch reads AGLCVAICFGIGGGIMVGCIL. At 432 to 475 the chain is on the cytoplasmic side; that stretch reads RLPIWCDPADDNCFNDEPYWELPEEEEIIPPILHYNNHMVNKDV.

It belongs to the ammonium transporter (TC 2.A.49) family. Rh subfamily. As to quaternary structure, homotrimer.

It is found in the apical cell membrane. Functions as an ammonia transporter. May play a role in the elimination of ammonia in the gill. In Tetraodon nigroviridis (Spotted green pufferfish), this protein is Ammonium transporter Rh type C (rhcg).